A 344-amino-acid chain; its full sequence is N-acetyl-gamma-glutamyl-phosphate reductase (344 aa).

The active site involves Cys-150.

Belongs to the NAGSA dehydrogenase family. Type 1 subfamily.

It localises to the cytoplasm. It carries out the reaction N-acetyl-L-glutamate 5-semialdehyde + phosphate + NADP(+) = N-acetyl-L-glutamyl 5-phosphate + NADPH + H(+). The protein operates within amino-acid biosynthesis; L-arginine biosynthesis; N(2)-acetyl-L-ornithine from L-glutamate: step 3/4. In terms of biological role, catalyzes the NADPH-dependent reduction of N-acetyl-5-glutamyl phosphate to yield N-acetyl-L-glutamate 5-semialdehyde. The protein is N-acetyl-gamma-glutamyl-phosphate reductase of Pseudomonas aeruginosa (strain ATCC 15692 / DSM 22644 / CIP 104116 / JCM 14847 / LMG 12228 / 1C / PRS 101 / PAO1).